We begin with the raw amino-acid sequence, 540 residues long: Putative BTB/POZ domain-containing protein R224 (540 aa).

The BTB domain occupies 16–88 (TDLELTLIDE…FYKNPIKYKN (73 aa)). A helical membrane pass occupies residues 356–376 (IFVSLLNDIIFVLSSINMYFI).

This sequence belongs to the mimivirus BTB/WD family.

Its subcellular location is the membrane. The polypeptide is Putative BTB/POZ domain-containing protein R224 (Acanthamoeba polyphaga (Amoeba)).